The primary structure comprises 600 residues: Tripeptidyl-peptidase 1 (600 aa).

The signal sequence occupies residues Met1–Cys22. The propeptide at Lys23–Gly220 is removed in mature form. 3 N-linked (GlcNAc...) asparagine glycosylation sites follow: Asn91, Asn259, and Asn266. The Peptidase S53 domain maps to Tyr248–Glu600. Residues Glu318 and Asp322 each act as charge relay system in the active site. A disulfide bridge links Cys411 with Cys570. Asn475 and Asn483 each carry an N-linked (GlcNAc...) asparagine glycan. Ser514 serves as the catalytic Charge relay system. Residues Asp559, Ile560, Gly579, and Asp581 each contribute to the Ca(2+) site.

Monomer. The cofactor is Ca(2+). Post-translationally, activated by autocatalytic proteolytical processing upon acidification. N-glycosylation is required for processing and activity.

It is found in the secreted. The enzyme catalyses Release of an N-terminal tripeptide from a polypeptide, but also has endopeptidase activity.. Its function is as follows. Serine protease with tripeptidyl-peptidase I activity. The sequence is that of Tripeptidyl-peptidase 1 (tpp1) from Dictyostelium discoideum (Social amoeba).